Here is a 381-residue protein sequence, read N- to C-terminus: Cytochrome b (381 aa).

The next 4 membrane-spanning stretches (helical) occupy residues 34 to 54, 78 to 99, 114 to 134, and 179 to 199; these read FGSLLGLCLIIQILTGLFLAM, WLIRNIHANGASLFFICVYLHI, WNIGVILLFLLMATAFVGYVL, and FFAFHFLLPFLILALTIIHLL. Histidine 84 and histidine 98 together coordinate heme b. Heme b contacts are provided by histidine 183 and histidine 197. Histidine 202 contacts a ubiquinone. The next 4 helical transmembrane spans lie at 227–247, 289–309, 321–341, and 348–368; these read YKDLLGFFVMIFFLAVFALFM, LGGVLALLFSIFILMLVPLLH, MTQIFFWLLVANSIILTWIGG, and FIMVGQIASISYFSLFLIIMP.

The protein belongs to the cytochrome b family. The cytochrome bc1 complex contains 3 respiratory subunits (MT-CYB, CYC1 and UQCRFS1), 2 core proteins (UQCRC1 and UQCRC2) and probably 6 low-molecular weight proteins. Requires heme b as cofactor.

Its subcellular location is the mitochondrion inner membrane. Its function is as follows. Component of the ubiquinol-cytochrome c reductase complex (complex III or cytochrome b-c1 complex) that is part of the mitochondrial respiratory chain. The b-c1 complex mediates electron transfer from ubiquinol to cytochrome c. Contributes to the generation of a proton gradient across the mitochondrial membrane that is then used for ATP synthesis. The polypeptide is Cytochrome b (mt-cyb) (Carcharhinus plumbeus (Sandbar shark)).